Reading from the N-terminus, the 200-residue chain is Putative 3-methyladenine DNA glycosylase (200 aa).

This sequence belongs to the DNA glycosylase MPG family.

This is Putative 3-methyladenine DNA glycosylase from Methanocella arvoryzae (strain DSM 22066 / NBRC 105507 / MRE50).